Reading from the N-terminus, the 177-residue chain is Large ribosomal subunit protein uL6 (177 aa).

Belongs to the universal ribosomal protein uL6 family. As to quaternary structure, part of the 50S ribosomal subunit.

Functionally, this protein binds to the 23S rRNA, and is important in its secondary structure. It is located near the subunit interface in the base of the L7/L12 stalk, and near the tRNA binding site of the peptidyltransferase center. This chain is Large ribosomal subunit protein uL6, found in Beijerinckia indica subsp. indica (strain ATCC 9039 / DSM 1715 / NCIMB 8712).